We begin with the raw amino-acid sequence, 290 residues long: Acetyl-coenzyme A carboxylase carboxyl transferase subunit beta (290 aa).

A CoA carboxyltransferase N-terminal domain is found at 27–290 (LWVKCPSCES…LQKQPADAVA (264 aa)). Cys-31, Cys-34, Cys-50, and Cys-53 together coordinate Zn(2+). The segment at 31–53 (CPSCESTLYRTDVEANLHVCPKC) adopts a C4-type zinc-finger fold.

This sequence belongs to the AccD/PCCB family. Acetyl-CoA carboxylase is a heterohexamer composed of biotin carboxyl carrier protein (AccB), biotin carboxylase (AccC) and two subunits each of ACCase subunit alpha (AccA) and ACCase subunit beta (AccD). It depends on Zn(2+) as a cofactor.

It localises to the cytoplasm. The enzyme catalyses N(6)-carboxybiotinyl-L-lysyl-[protein] + acetyl-CoA = N(6)-biotinyl-L-lysyl-[protein] + malonyl-CoA. Its pathway is lipid metabolism; malonyl-CoA biosynthesis; malonyl-CoA from acetyl-CoA: step 1/1. In terms of biological role, component of the acetyl coenzyme A carboxylase (ACC) complex. Biotin carboxylase (BC) catalyzes the carboxylation of biotin on its carrier protein (BCCP) and then the CO(2) group is transferred by the transcarboxylase to acetyl-CoA to form malonyl-CoA. The protein is Acetyl-coenzyme A carboxylase carboxyl transferase subunit beta of Cupriavidus taiwanensis (strain DSM 17343 / BCRC 17206 / CCUG 44338 / CIP 107171 / LMG 19424 / R1) (Ralstonia taiwanensis (strain LMG 19424)).